The primary structure comprises 209 residues: Guanylate kinase (209 aa).

Positions 7-185 (GNLYIVAAPS…AAMELQSIVI (179 aa)) constitute a Guanylate kinase-like domain. ATP is bound at residue 14 to 21 (APSGGGKT).

The protein belongs to the guanylate kinase family.

It localises to the cytoplasm. It catalyses the reaction GMP + ATP = GDP + ADP. Essential for recycling GMP and indirectly, cGMP. This chain is Guanylate kinase, found in Legionella pneumophila (strain Paris).